The chain runs to 384 residues: Putative 8-amino-7-oxononanoate synthase (384 aa).

Arg22 contributes to the substrate binding site. 109-110 contributes to the pyridoxal 5'-phosphate binding site; that stretch reads GY. Position 134 (His134) interacts with substrate. Pyridoxal 5'-phosphate is bound by residues Ser182, 207 to 210, and 236 to 239; these read DDAH and TLSK. Position 239 is an N6-(pyridoxal phosphate)lysine (Lys239). A substrate-binding site is contributed by Thr348.

This sequence belongs to the class-II pyridoxal-phosphate-dependent aminotransferase family. BioF subfamily. Homodimer. It depends on pyridoxal 5'-phosphate as a cofactor.

The catalysed reaction is 6-carboxyhexanoyl-[ACP] + L-alanine + H(+) = (8S)-8-amino-7-oxononanoate + holo-[ACP] + CO2. It participates in cofactor biosynthesis; biotin biosynthesis. Its function is as follows. Catalyzes the decarboxylative condensation of pimeloyl-[acyl-carrier protein] and L-alanine to produce 8-amino-7-oxononanoate (AON), [acyl-carrier protein], and carbon dioxide. The chain is Putative 8-amino-7-oxononanoate synthase (bioF) from Caulobacter vibrioides (strain ATCC 19089 / CIP 103742 / CB 15) (Caulobacter crescentus).